A 110-amino-acid chain; its full sequence is Iron-sulfur cluster assembly protein CyaY (110 aa).

It belongs to the frataxin family.

In terms of biological role, involved in iron-sulfur (Fe-S) cluster assembly. May act as a regulator of Fe-S biogenesis. In Pseudomonas fluorescens (strain SBW25), this protein is Iron-sulfur cluster assembly protein CyaY.